Here is an 872-residue protein sequence, read N- to C-terminus: Alanine--tRNA ligase (872 aa).

Residues His567, His571, Cys669, and His673 each contribute to the Zn(2+) site.

The protein belongs to the class-II aminoacyl-tRNA synthetase family. The cofactor is Zn(2+).

The protein localises to the cytoplasm. It carries out the reaction tRNA(Ala) + L-alanine + ATP = L-alanyl-tRNA(Ala) + AMP + diphosphate. In terms of biological role, catalyzes the attachment of alanine to tRNA(Ala) in a two-step reaction: alanine is first activated by ATP to form Ala-AMP and then transferred to the acceptor end of tRNA(Ala). Also edits incorrectly charged Ser-tRNA(Ala) and Gly-tRNA(Ala) via its editing domain. This chain is Alanine--tRNA ligase, found in Streptococcus pyogenes serotype M3 (strain ATCC BAA-595 / MGAS315).